A 620-amino-acid polypeptide reads, in one-letter code: Membrane protein insertase YidC (620 aa).

Residues asparagine 7 to methionine 27 form a helical membrane-spanning segment. The span at alanine 37–alanine 58 shows a compositional bias: low complexity. Positions alanine 37 to aspartate 77 are disordered. Helical transmembrane passes span phenylalanine 399–serine 419, tryptophan 469–isoleucine 489, leucine 514–isoleucine 534, and tryptophan 560–tryptophan 580.

Belongs to the OXA1/ALB3/YidC family. Type 1 subfamily. As to quaternary structure, interacts with the Sec translocase complex via SecD. Specifically interacts with transmembrane segments of nascent integral membrane proteins during membrane integration.

The protein localises to the cell inner membrane. Functionally, required for the insertion and/or proper folding and/or complex formation of integral membrane proteins into the membrane. Involved in integration of membrane proteins that insert both dependently and independently of the Sec translocase complex, as well as at least some lipoproteins. Aids folding of multispanning membrane proteins. This Allorhizobium ampelinum (strain ATCC BAA-846 / DSM 112012 / S4) (Agrobacterium vitis (strain S4)) protein is Membrane protein insertase YidC.